The primary structure comprises 132 residues: Protein KRTCAP2 homolog (132 aa).

Transmembrane regions (helical) follow at residues 1–21, 35–55, 69–89, and 92–109; these read MAVP…LIFS, MATV…LTAV, AKLF…CGMV, and VCAT…YYIN.

It belongs to the KRTCAP2 family. Component of the oligosaccharyltransferase (OST) complex.

Its subcellular location is the membrane. Its function is as follows. Subunit of the oligosaccharyl transferase (OST) complex that catalyzes the initial transfer of a defined glycan (Glc(3)Man(9)GlcNAc(2) in eukaryotes) from the lipid carrier dolichol-pyrophosphate to an asparagine residue within an Asn-X-Ser/Thr consensus motif in nascent polypeptide chains, the first step in protein N-glycosylation. N-glycosylation occurs cotranslationally and the complex associates with the Sec61 complex at the channel-forming translocon complex that mediates protein translocation across the endoplasmic reticulum (ER). All subunits are required for a maximal enzyme activity. This is Protein KRTCAP2 homolog from Aedes aegypti (Yellowfever mosquito).